Here is a 339-residue protein sequence, read N- to C-terminus: Dihydroorotate dehydrogenase (quinone) (339 aa).

Residues 62 to 66 and threonine 86 contribute to the FMN site; that span reads AGLDK. Substrate is bound at residue lysine 66. Residue 111 to 115 coordinates substrate; it reads NRMGF. 2 residues coordinate FMN: asparagine 139 and asparagine 172. Position 172 (asparagine 172) interacts with substrate. Serine 175 serves as the catalytic Nucleophile. Asparagine 177 contacts substrate. 2 residues coordinate FMN: lysine 217 and threonine 245. 246 to 247 lines the substrate pocket; that stretch reads NT. FMN is bound by residues glycine 268, glycine 297, and 318–319; that span reads YS.

This sequence belongs to the dihydroorotate dehydrogenase family. Type 2 subfamily. As to quaternary structure, monomer. The cofactor is FMN.

Its subcellular location is the cell membrane. The catalysed reaction is (S)-dihydroorotate + a quinone = orotate + a quinol. The protein operates within pyrimidine metabolism; UMP biosynthesis via de novo pathway; orotate from (S)-dihydroorotate (quinone route): step 1/1. Catalyzes the conversion of dihydroorotate to orotate with quinone as electron acceptor. The polypeptide is Dihydroorotate dehydrogenase (quinone) (Shewanella amazonensis (strain ATCC BAA-1098 / SB2B)).